A 208-amino-acid chain; its full sequence is Ubiquitin-conjugating enzyme E2 S (208 aa).

A UBC core domain is found at 14–160 (QTIRQVMKEL…ARMMTEIHAQ (147 aa)). The Glycyl thioester intermediate role is filled by cysteine 98. Positions 161-193 (PAKCGAGASDAKDDDGPSTKKHAGLDKKLQDKK) are disordered. The span at 170 to 193 (DAKDDDGPSTKKHAGLDKKLQDKK) shows a compositional bias: basic and acidic residues.

This sequence belongs to the ubiquitin-conjugating enzyme family.

It carries out the reaction S-ubiquitinyl-[E1 ubiquitin-activating enzyme]-L-cysteine + [E2 ubiquitin-conjugating enzyme]-L-cysteine = [E1 ubiquitin-activating enzyme]-L-cysteine + S-ubiquitinyl-[E2 ubiquitin-conjugating enzyme]-L-cysteine.. The protein operates within protein modification; protein ubiquitination. Functionally, catalyzes the covalent attachment of ubiquitin to other proteins. Acts as an essential factor of the anaphase promoting complex/cyclosome (APC/C), a cell cycle-regulated ubiquitin ligase that controls progression through mitosis. Acts by specifically elongating polyubiquitin chains initiated by the E2 enzyme vih/UbcH10 on APC/C substrates, enhancing the degradation of APC/C substrates by the proteasome and promoting mitotic exit. The sequence is that of Ubiquitin-conjugating enzyme E2 S from Drosophila virilis (Fruit fly).